The sequence spans 316 residues: tRNA-dihydrouridine(16) synthase (316 aa).

FMN is bound by residues 7–9 and Q68; that span reads PME. Residue C98 is the Proton donor of the active site. Residues K139, 200–202, and 224–225 contribute to the FMN site; these read NGE and GR.

It belongs to the Dus family. DusC subfamily. Requires FMN as cofactor.

The enzyme catalyses 5,6-dihydrouridine(16) in tRNA + NADP(+) = uridine(16) in tRNA + NADPH + H(+). It carries out the reaction 5,6-dihydrouridine(16) in tRNA + NAD(+) = uridine(16) in tRNA + NADH + H(+). Catalyzes the synthesis of 5,6-dihydrouridine (D), a modified base found in the D-loop of most tRNAs, via the reduction of the C5-C6 double bond in target uridines. Specifically modifies U16 in tRNAs. This Escherichia coli O157:H7 protein is tRNA-dihydrouridine(16) synthase.